A 127-amino-acid chain; its full sequence is Apolipoprotein C-IV (127 aa).

Residues 1–27 (MSLLRNRLQDLPALCLCVLVLACIGAC) form the signal peptide. The N-linked (GlcNAc...) asparagine glycan is linked to Asn-63.

The protein belongs to the apolipoprotein C4 family.

Its subcellular location is the secreted. In terms of biological role, may participate in lipoprotein metabolism. This chain is Apolipoprotein C-IV (APOC4), found in Colobus guereza (Mantled guereza).